A 257-amino-acid polypeptide reads, in one-letter code: MLALYGTEVASRLLLGTARYPSPAILAEAVRQSATEIVTVSLRRETAGGRNGGAFFEMIRTLGVRILPNTAGCHGVSEAVLTAKMAREVFQTNWIKLEVIGNHDTLQPDVFGLVEAARILASEGFEVFPYTTDDLVVAERLLDAGCKVLMPWCAPIGSAAGPLNLSALRAMRAHFPDVPLIVDAGIGRPSHATTVMELGFDAVLLNTAVAGARDPAAMAGAFAKAIDAGRLAFTAGMLEPRDMAVPSTPVIGKAVFA.

Catalysis depends on Lys-96, which acts as the Schiff-base intermediate with DXP. Residues Gly-157, 184 to 185 (AG), and 206 to 207 (NT) each bind 1-deoxy-D-xylulose 5-phosphate.

Belongs to the ThiG family. Homotetramer. Forms heterodimers with either ThiH or ThiS.

It is found in the cytoplasm. It catalyses the reaction [ThiS sulfur-carrier protein]-C-terminal-Gly-aminoethanethioate + 2-iminoacetate + 1-deoxy-D-xylulose 5-phosphate = [ThiS sulfur-carrier protein]-C-terminal Gly-Gly + 2-[(2R,5Z)-2-carboxy-4-methylthiazol-5(2H)-ylidene]ethyl phosphate + 2 H2O + H(+). The protein operates within cofactor biosynthesis; thiamine diphosphate biosynthesis. Functionally, catalyzes the rearrangement of 1-deoxy-D-xylulose 5-phosphate (DXP) to produce the thiazole phosphate moiety of thiamine. Sulfur is provided by the thiocarboxylate moiety of the carrier protein ThiS. In vitro, sulfur can be provided by H(2)S. The sequence is that of Thiazole synthase from Rhizobium rhizogenes (strain K84 / ATCC BAA-868) (Agrobacterium radiobacter).